Here is a 342-residue protein sequence, read N- to C-terminus: Renalase (342 aa).

The N-terminal stretch at 1–17 is a signal peptide; it reads MAQVLIVGAGMTGSLCA. Residues threonine 12, arginine 42, and 61–62 contribute to the FAD site; that span reads QY.

This sequence belongs to the renalase family. Requires FAD as cofactor. Secreted into the blood by the kidney. Highly expressed in the kidney, expressed at lower level in heart, skeletal muscle and small intestine. Its plasma concentration is markedly reduced in patients with end-stage renal disease, as compared with healthy subjects.

Its subcellular location is the secreted. The enzyme catalyses 1,2-dihydro-beta-NAD + O2 + H(+) = H2O2 + NAD(+). It carries out the reaction 1,2-dihydro-beta-NADP + O2 + H(+) = H2O2 + NADP(+). The catalysed reaction is 1,6-dihydro-beta-NADP + O2 + H(+) = H2O2 + NADP(+). It catalyses the reaction 1,6-dihydro-beta-NAD + O2 + H(+) = H2O2 + NAD(+). Catalyzes the oxidation of the less abundant 1,2-dihydro-beta-NAD(P) and 1,6-dihydro-beta-NAD(P) to form beta-NAD(P)(+). The enzyme hormone is secreted by the kidney, and circulates in blood and modulates cardiac function and systemic blood pressure. Lowers blood pressure in vivo by decreasing cardiac contractility and heart rate and preventing a compensatory increase in peripheral vascular tone, suggesting a causal link to the increased plasma catecholamine and heightened cardiovascular risk. High concentrations of catecholamines activate plasma renalase and promotes its secretion and synthesis. The sequence is that of Renalase (RNLS) from Homo sapiens (Human).